The chain runs to 564 residues: Phenylalanine--tRNA ligase beta subunit (564 aa).

The 77-residue stretch at 286 to 362 (YFQNTLEVSV…IGRGLDSFKP (77 aa)) folds into the B5 domain. Residues D340, D346, E349, and E350 each coordinate Mg(2+).

The protein belongs to the phenylalanyl-tRNA synthetase beta subunit family. Type 2 subfamily. In terms of assembly, tetramer of two alpha and two beta subunits. It depends on Mg(2+) as a cofactor.

It is found in the cytoplasm. The enzyme catalyses tRNA(Phe) + L-phenylalanine + ATP = L-phenylalanyl-tRNA(Phe) + AMP + diphosphate + H(+). The polypeptide is Phenylalanine--tRNA ligase beta subunit (Borrelia hermsii (strain HS1 / DAH)).